Reading from the N-terminus, the 339-residue chain is Sperm acrosome membrane-associated protein 6 (339 aa).

Residues 1–41 (MTSQRSLSSPQTRRPSVMGLISLVGSIVLLFLLIFRASTWA) form the signal peptide. The short motif at 42-45 (CLFC) is the CXXC motif element. Disulfide bonds link Cys-42-Cys-155, Cys-45-Cys-158, Cys-56-Cys-70, Cys-140-Cys-163, Cys-144-Cys-169, and Cys-186-Cys-241. Residues 42–310 (CLFCFTTYEE…NPQALTLGNL (269 aa)) are Extracellular-facing. Positions 155 to 158 (CSGC) match the CXXC motif motif. Residues 166-251 (PLDCPVQDML…VILHDQRPLA (86 aa)) enclose the Ig-like domain. Asn-258 is a glycosylation site (N-linked (GlcNAc...) asparagine). The chain crosses the membrane as a helical span at residues 311–331 (FLLAATAALGSASVTLLVWLF). Topologically, residues 332–339 (FRWYLSGN) are cytoplasmic.

It belongs to the SPACA6 family. Forms a complex with IZUMO1 and TMEM81 on spermatocyte cell membrane required for fertilization. In terms of tissue distribution, highly expressed in testis. Minor expression also detected in epididymis, seminal vesicle and ovary. Predominantly expressed in testicular germ cells during spermiogenesis. Most abundant in round spermatids and detected at lower levels in elongating spermatids.

It localises to the cytoplasmic vesicle. Its subcellular location is the secretory vesicle. It is found in the acrosome membrane. Its function is as follows. Sperm protein required for fusion of sperm with the egg membrane during fertilization. May regulate the expression of sperm surface protein DCST2. This Mus musculus (Mouse) protein is Sperm acrosome membrane-associated protein 6.